A 55-amino-acid chain; its full sequence is Large ribosomal subunit protein bL33 (55 aa).

Belongs to the bacterial ribosomal protein bL33 family.

The chain is Large ribosomal subunit protein bL33 from Ruegeria sp. (strain TM1040) (Silicibacter sp.).